We begin with the raw amino-acid sequence, 62 residues long: Sec-independent protein translocase protein TatA (62 aa).

A helical transmembrane segment spans residues 10–32 (LLIILIIVIAIFGAGKLAGLGGA).

This sequence belongs to the TatA/E family. Forms a complex with TatC.

It localises to the cell membrane. Part of the twin-arginine translocation (Tat) system that transports large folded proteins containing a characteristic twin-arginine motif in their signal peptide across membranes. TatA could form the protein-conducting channel of the Tat system. The polypeptide is Sec-independent protein translocase protein TatA (Chloroflexus aurantiacus (strain ATCC 29366 / DSM 635 / J-10-fl)).